Here is a 54-residue protein sequence, read N- to C-terminus: Defensin-like protein 1 (54 aa).

Disulfide bonds link cysteine 6–cysteine 54, cysteine 17–cysteine 39, cysteine 23–cysteine 48, and cysteine 27–cysteine 50.

This sequence belongs to the DEFL family.

It localises to the secreted. Possesses antifungal activity insensitive to inorganic cations. Causes germ tubes and hyphae to swell and form multiple hyphal buds. Binds to the plasma membrane of the fungus. Has no inhibitory effect on insect gut alpha-amylase. This chain is Defensin-like protein 1, found in Heuchera sanguinea (Coralbells).